Consider the following 143-residue polypeptide: Phosphatidylethanolamine-binding protein homolog R644 (143 aa).

Belongs to the phosphatidylethanolamine-binding protein family.

The protein localises to the virion. The protein is Phosphatidylethanolamine-binding protein homolog R644 of Acanthamoeba polyphaga mimivirus (APMV).